Here is a 245-residue protein sequence, read N- to C-terminus: 1-(5-phosphoribosyl)-5-[(5-phosphoribosylamino)methylideneamino] imidazole-4-carboxamide isomerase (245 aa).

Asp8 (proton acceptor) is an active-site residue. Asp129 acts as the Proton donor in catalysis.

Belongs to the HisA/HisF family.

It localises to the cytoplasm. The enzyme catalyses 1-(5-phospho-beta-D-ribosyl)-5-[(5-phospho-beta-D-ribosylamino)methylideneamino]imidazole-4-carboxamide = 5-[(5-phospho-1-deoxy-D-ribulos-1-ylimino)methylamino]-1-(5-phospho-beta-D-ribosyl)imidazole-4-carboxamide. The protein operates within amino-acid biosynthesis; L-histidine biosynthesis; L-histidine from 5-phospho-alpha-D-ribose 1-diphosphate: step 4/9. The polypeptide is 1-(5-phosphoribosyl)-5-[(5-phosphoribosylamino)methylideneamino] imidazole-4-carboxamide isomerase (Geotalea uraniireducens (strain Rf4) (Geobacter uraniireducens)).